The chain runs to 621 residues: DDB1- and CUL4-associated factor 10 homolog (621 aa).

4 WD repeats span residues 46-85 (GRTGAIFNLEFNADGNVVVAATERKCVLVFDAITQKEIFK), 89-127 (AHTDSVNCIKFFDERLFATGSDDFTVALWDLRNMKQKLR), 131-170 (GHSNWVKNIEYSSKDKLLVSSGFDGSIFTWDINSQTEQGL), and 176-215 (FHASGLMRCRISPTGDKLVLCTSGGYIMIIHHLDLTTLHK). Disordered stretches follow at residues 305–349 (VRSE…PRQA) and 437–483 (LMGS…TTVR). Ser307 carries the post-translational modification Phosphoserine. Residues 324-342 (STTLASRSSLNESQDQDTV) are compositionally biased toward polar residues. Over residues 454 to 478 (ESNQSSSSSSSSSSSSSSSSSSNNS) the composition is skewed to low complexity. Ser494 and Ser497 each carry phosphoserine. A WD 5 repeat occupies 588-621 (EHQDVVLCAKFSPREPLLVTGCNGGEVTWYRPNL).

It belongs to the WD repeat DCAF10 family.

This chain is DDB1- and CUL4-associated factor 10 homolog, found in Drosophila melanogaster (Fruit fly).